A 523-amino-acid chain; its full sequence is MGEDFMHPPFQTYPSKNSEGKKHIVIVGGGIIGCCTAYYLTQHPSFSPSTHHITIIESRRIAGGASGKAGGLLASWAFPHQIVPLSFQLHQELSDEYDGENNWDYRRLTTVSLEADVREEVIENYERLSKKAYNLNVPPPKKRPGYISNKFNIGDSNSSLSSSGSSLKNDSASNEEEGSDIHVSSSVPSLHSLTNERMRSHTNSASDLDSVSPVEQLRETNIHNPLPADLDWIRRELVNDWSSLGGTDTTAQLHPYKFTHFILSKAMETGAVDLLLGKVVGLKCDEMDCVHSLKYLPSVVKNRRNSRGHAENPDIKLGTIFNDENAKPIEINDIQQIVLSMGPWTSKILKDCPISGLRAHSVTIKPSEKTVSPYAILAELKVNDREFFSPEMYARKDEVYVCGEGDTLVNIPESSDDVEVVSEKCDELYHYVSKLSPTLSKGHLLRKQACFLPVLNVPTSSGPLIGETNVKDLYIASGHSCWGINNAPATGKLMAEILLDGEATSAEISSLDPKLYFDATILS.

Residues 157-172 show a composition bias toward low complexity; the sequence is NSSLSSSGSSLKNDSA. Residues 157–189 are disordered; sequence NSSLSSSGSSLKNDSASNEEEGSDIHVSSSVPS. Phosphoserine is present on residues S189, S204, and S306.

Belongs to the TDA3 family. Interacts with BTN2.

Its subcellular location is the cytoplasm. It localises to the late endosome. Its function is as follows. Putative oxidoreductase that negatively regulates the retrieval of cargo from late endosomes to the Golgi. Regulates YIF1 and KEX2 localization. Required for fast DNA replication. This chain is Putative oxidoreductase TDA3 (TDA3), found in Saccharomyces cerevisiae (strain ATCC 204508 / S288c) (Baker's yeast).